We begin with the raw amino-acid sequence, 468 residues long: Zinc finger protein 672 (468 aa).

4 consecutive C2H2-type zinc fingers follow at residues 15–37, 43–65, 71–93, and 100–123; these read YSCS…ERAH, FCCL…RWTH, YICS…LGTH, and RPCR…ARQH. A C2H2-type 5; degenerate zinc finger spans residues 129 to 151; the sequence is HRCPLCARSFRQSALPFHLARAH. C2H2-type zinc fingers lie at residues 167–189, 202–224, 230–252, 258–280, 286–308, 314–336, 342–364, 370–392, and 398–420; these read YHCT…SRIH, HLCG…LQRH, FKCP…QRTH, YACS…QRSH, HVCA…QRSH, FPCP…LRTH, YHCE…LRNH, HKCP…RKTH, and AECT…QRSH.

It belongs to the krueppel C2H2-type zinc-finger protein family.

The protein localises to the nucleus. Functionally, may be involved in transcriptional regulation. The protein is Zinc finger protein 672 (Znf672) of Mus musculus (Mouse).